The sequence spans 502 residues: ATP synthase subunit alpha (502 aa).

The segment at 115–137 (VDGLGPVETTETRPIESPAPGVM) is disordered. ATP is bound at residue 169-176 (GDRQTGKT).

It belongs to the ATPase alpha/beta chains family. As to quaternary structure, F-type ATPases have 2 components, CF(1) - the catalytic core - and CF(0) - the membrane proton channel. CF(1) has five subunits: alpha(3), beta(3), gamma(1), delta(1), epsilon(1). CF(0) has three main subunits: a(1), b(2) and c(9-12). The alpha and beta chains form an alternating ring which encloses part of the gamma chain. CF(1) is attached to CF(0) by a central stalk formed by the gamma and epsilon chains, while a peripheral stalk is formed by the delta and b chains.

The protein localises to the cell membrane. It carries out the reaction ATP + H2O + 4 H(+)(in) = ADP + phosphate + 5 H(+)(out). Its function is as follows. Produces ATP from ADP in the presence of a proton gradient across the membrane. The alpha chain is a regulatory subunit. This chain is ATP synthase subunit alpha, found in Geobacillus stearothermophilus (Bacillus stearothermophilus).